A 197-amino-acid chain; its full sequence is Peptidyl-tRNA hydrolase (197 aa).

A tRNA-binding site is contributed by tyrosine 21. The active-site Proton acceptor is histidine 26. Tyrosine 72, asparagine 74, and asparagine 120 together coordinate tRNA.

The protein belongs to the PTH family. As to quaternary structure, monomer.

It is found in the cytoplasm. The enzyme catalyses an N-acyl-L-alpha-aminoacyl-tRNA + H2O = an N-acyl-L-amino acid + a tRNA + H(+). In terms of biological role, hydrolyzes ribosome-free peptidyl-tRNAs (with 1 or more amino acids incorporated), which drop off the ribosome during protein synthesis, or as a result of ribosome stalling. Its function is as follows. Catalyzes the release of premature peptidyl moieties from peptidyl-tRNA molecules trapped in stalled 50S ribosomal subunits, and thus maintains levels of free tRNAs and 50S ribosomes. The sequence is that of Peptidyl-tRNA hydrolase from Alkalilimnicola ehrlichii (strain ATCC BAA-1101 / DSM 17681 / MLHE-1).